We begin with the raw amino-acid sequence, 444 residues long: Homogentisate 1,2-dioxygenase (444 aa).

His-298 acts as the Proton acceptor in catalysis. Fe cation-binding residues include His-341 and Glu-347. Residues Tyr-356 and His-377 each coordinate homogentisate. His-377 is a Fe cation binding site.

This sequence belongs to the homogentisate dioxygenase family. Hexamer; dimer of trimers. Requires Fe cation as cofactor.

It catalyses the reaction homogentisate + O2 = 4-maleylacetoacetate + H(+). Its pathway is amino-acid degradation; L-phenylalanine degradation; acetoacetate and fumarate from L-phenylalanine: step 4/6. In terms of biological role, involved in the catabolism of homogentisate (2,5-dihydroxyphenylacetate or 2,5-OH-PhAc), a central intermediate in the degradation of phenylalanine and tyrosine. Catalyzes the oxidative ring cleavage of the aromatic ring of homogentisate to yield maleylacetoacetate. In Burkholderia orbicola (strain AU 1054), this protein is Homogentisate 1,2-dioxygenase.